Reading from the N-terminus, the 311-residue chain is Pyrimidine-specific ribonucleoside hydrolase RihA (311 aa).

H240 is an active-site residue.

The protein belongs to the IUNH family. RihA subfamily.

Functionally, hydrolyzes with equal efficiency cytidine or uridine to ribose and cytosine or uracil, respectively. This is Pyrimidine-specific ribonucleoside hydrolase RihA from Escherichia coli (strain K12 / MC4100 / BW2952).